The primary structure comprises 493 residues: Xaa-Pro dipeptidase (493 aa).

Ala2 carries the N-acetylalanine modification. Position 167 is a phosphoserine (Ser167). His255 is an a dipeptide binding site. Mn(2+)-binding residues include Asp276, Asp287, and His370. Position 287 (Asp287) interacts with a dipeptide. A dipeptide-binding residues include His377 and Arg398. Mn(2+)-binding residues include Glu412 and Glu452.

The protein belongs to the peptidase M24B family. Eukaryotic-type prolidase subfamily. In terms of assembly, homodimer. Mn(2+) is required as a cofactor.

It carries out the reaction Xaa-L-Pro dipeptide + H2O = an L-alpha-amino acid + L-proline. Its function is as follows. Dipeptidase that catalyzes the hydrolysis of dipeptides with a prolyl (Xaa-Pro) or hydroxyprolyl residue in the C-terminal position. The preferred dipeptide substrate is Gly-Pro, but other Xaa-Pro dipeptides, such as Ala-Pro, Met-Pro, Phe-Pro, Val-Pro and Leu-Pro, can be cleaved. Plays an important role in collagen metabolism because the high level of iminoacids in collagen. The polypeptide is Xaa-Pro dipeptidase (Pepd) (Mus musculus (Mouse)).